The following is a 418-amino-acid chain: Glutamyl-tRNA reductase (418 aa).

Substrate-binding positions include 49–52, Ser-109, 114–116, and Gln-120; these read TCNR and EPQ. Cys-50 (nucleophile) is an active-site residue. NADP(+) is bound at residue 189 to 194; that stretch reads GAGETI.

It belongs to the glutamyl-tRNA reductase family. Homodimer.

The enzyme catalyses (S)-4-amino-5-oxopentanoate + tRNA(Glu) + NADP(+) = L-glutamyl-tRNA(Glu) + NADPH + H(+). Its pathway is porphyrin-containing compound metabolism; protoporphyrin-IX biosynthesis; 5-aminolevulinate from L-glutamyl-tRNA(Glu): step 1/2. Its function is as follows. Catalyzes the NADPH-dependent reduction of glutamyl-tRNA(Glu) to glutamate 1-semialdehyde (GSA). The sequence is that of Glutamyl-tRNA reductase from Klebsiella pneumoniae (strain 342).